Reading from the N-terminus, the 388-residue chain is Fibrinogen- and Ig-binding protein (388 aa).

An N-terminal signal peptide occupies residues 1–41 (MSKTNPNKLYSLRKLKTGTASVAVDLTVLGTGLANTTDVKA). D repeat units lie at residues 288–293 (EKLEAE), 294–299 (AKALKE), 302–307 (AKQAEE), and 309–314 (AKLKAD). The segment at 308–362 (LAKLKADKASGAQKPDTKPGNKEVPTRPSQTRTNTNKAPMAQTKRQLPSTGEETT) is disordered. Basic and acidic residues predominate over residues 322–332 (PDTKPGNKEVP). Residues 334–362 (RPSQTRTNTNKAPMAQTKRQLPSTGEETT) show a composition bias toward polar residues. The LPXTG sorting signal motif lies at 354–358 (LPSTG). Pentaglycyl murein peptidoglycan amidated threonine is present on Thr-357. A propeptide spans 358–388 (GEETTNPFFTAAALTVIASAGVLALKRKEEN) (removed by sortase).

The protein resides in the secreted. The protein localises to the cell wall. In terms of biological role, binds IgG molecules of the Ig1, Ig2 and Ig4 subclasses, and also binds fibrinogen. The chain is Fibrinogen- and Ig-binding protein (mrp4) from Streptococcus pyogenes.